A 124-amino-acid chain; its full sequence is Nucleoid-associated protein Noca_0318 (124 aa).

This sequence belongs to the YbaB/EbfC family. In terms of assembly, homodimer.

It is found in the cytoplasm. Its subcellular location is the nucleoid. Its function is as follows. Binds to DNA and alters its conformation. May be involved in regulation of gene expression, nucleoid organization and DNA protection. The polypeptide is Nucleoid-associated protein Noca_0318 (Nocardioides sp. (strain ATCC BAA-499 / JS614)).